The chain runs to 372 residues: Protein Wnt-1 (372 aa).

Positions 1–29 (MLKSTQVILIFILLISIVESLSWLALGLA) are cleaved as a signal peptide. Disulfide bonds link Cys77–Cys88, Cys130–Cys138, and Cys140–Cys158. Asn87 carries N-linked (GlcNAc...) asparagine glycosylation. N-linked (GlcNAc...) asparagine glycosylation is present at Asn187. Disulfide bonds link Cys225/Cys239, Cys227/Cys234, Cys301/Cys332, Cys317/Cys327, Cys331/Cys371, Cys347/Cys362, Cys349/Cys359, and Cys354/Cys355. Ser231 is lipidated: O-palmitoleoyl serine; by mom-1.

Belongs to the Wnt family. In terms of processing, palmitoleoylation is required for efficient binding to frizzled receptors. Depalmitoleoylation leads to Wnt signaling pathway inhibition. As to expression, expressed in intestine, some head neurons and ventral nerve cord and pharyngeal neurons. Expressed in the tail and weakly expressed in the vulva and body wall muscles. Expressed highly in posterior dorsal and ventral muscle cells.

The protein resides in the secreted. Its subcellular location is the extracellular space. It is found in the extracellular matrix. It localises to the cytoplasm. The protein localises to the cell membrane. Its function is as follows. Ligand for members of the frizzled family of seven transmembrane receptors. Probable developmental protein. May be a signaling molecule which affects the development of discrete regions of tissues. Is likely to signal over only few cell diameters. Binds receptor tyrosine kinase cam-1. Together with Wnt ligand cwn-2, regulates the migration of CAN, ALM, BDU and HSN neurons during embryogenesis, the migration of QL and QR neuroblast descendants during larval development, and polarity of ALM neurons. Also acts with the Wnt ligand egl-20 to direct HSN neuron migration. Acts through the Wnt receptor cfz-2 to direct ALM migration. Also plays a role in axon growth and guidance in HSN and male CP neurons. In addition, together with Wnt ligand cwn-2, negatively regulates developmental neurite pruning of AIM neurons probably by acting as a ligand for receptor tyrosine kinase cam-1. Probably by activating the Wnt/Frizzled pathway, may regulate vulva development. May act redundantly with other Wnt ligands such as cwn-2 and mom-2 to control seam cell polarity. The polypeptide is Protein Wnt-1 (cwn-1) (Caenorhabditis elegans).